The following is a 109-amino-acid chain: Large ribosomal subunit protein uL18c (109 aa).

It belongs to the universal ribosomal protein uL18 family. As to quaternary structure, part of the 50S ribosomal subunit; contacts the 5S rRNA.

It localises to the plastid. It is found in the chloroplast. In terms of biological role, binds 5S rRNA, forms part of the central protuberance of the 50S subunit. This is Large ribosomal subunit protein uL18c (rpl18) from Cyanidioschyzon merolae (strain NIES-3377 / 10D) (Unicellular red alga).